The primary structure comprises 947 residues: Translation initiation factor IF-2 (947 aa).

Positions 55-361 (TKDAQAGSAK…PVTERKFHEL (307 aa)) are disordered. The span at 63–73 (AKDKQVAEQKA) shows a compositional bias: basic and acidic residues. Residues 76 to 90 (AKATTPQPAAATQEA) show a composition bias toward low complexity. Basic and acidic residues-rich tracts occupy residues 103 to 116 (FKAEREARAKEQAA), 125 to 134 (SNDRKSDYRQ), and 170 to 183 (NDGHRQAGNRDKNR). Residues 190–204 (RQQDTGRQGQTQAGA) are compositionally biased toward low complexity. 3 stretches are compositionally biased toward basic and acidic residues: residues 225 to 249 (ARQRESRFREQEEAKRLEQQARQEA), 257 to 267 (QTEDKKHREAS), and 294 to 311 (NRPDKGHDRDHGLEDGQK). Over residues 316–334 (SWNSQNQVRNQKNSNWNNN) the composition is skewed to low complexity. The span at 335-345 (KKNKKGKHHKN) shows a compositional bias: basic residues. Positions 448–617 (ERAPVVTIMG…LLVAEVEELK (170 aa)) constitute a tr-type G domain. Residues 457–464 (GHVDHGKT) are G1. 457 to 464 (GHVDHGKT) is a GTP binding site. Residues 482–486 (GITQH) are G2. A G3 region spans residues 503-506 (DTPG). GTP is bound by residues 503–507 (DTPGH) and 557–560 (NKID). Residues 557-560 (NKID) are G4. The interval 593 to 595 (SAK) is G5.

This sequence belongs to the TRAFAC class translation factor GTPase superfamily. Classic translation factor GTPase family. IF-2 subfamily.

The protein localises to the cytoplasm. One of the essential components for the initiation of protein synthesis. Protects formylmethionyl-tRNA from spontaneous hydrolysis and promotes its binding to the 30S ribosomal subunits. Also involved in the hydrolysis of GTP during the formation of the 70S ribosomal complex. The chain is Translation initiation factor IF-2 from Streptococcus equi subsp. zooepidemicus (strain MGCS10565).